Consider the following 447-residue polypeptide: BAG family molecular chaperone regulator 5 (447 aa).

5 BAG domains span residues 9–86 (SISR…EQNA), 95–167 (QNIF…EDCM), 182–260 (SVAK…DLEE), 275–350 (SIIK…DLKE), and 365–442 (PHKA…DMKS).

In terms of assembly, binds to the ATPase domain of HSP/HSP70 chaperones. Binds PRKN. Interacts with HSPA8. Interacts with JPH2.

In terms of biological role, co-chaperone for HSP/HSP70 proteins. It functions as a nucleotide-exchange factor promoting the release of ADP from HSP70, thereby activating HSP70-mediated protein refolding. Has an essential role in maintaining proteostasis at junctional membrane complexes (JMC), where it may function as a scaffold between the HSPA8 chaperone and JMC proteins enabling correct, HSPA8-dependent JMC protein folding. Inhibits both auto-ubiquitination of PRKN and ubiquitination of target proteins by PRKN. This chain is BAG family molecular chaperone regulator 5 (Bag5), found in Mus musculus (Mouse).